A 487-amino-acid chain; its full sequence is Chromosomal replication initiator protein DnaA (487 aa).

A domain I, interacts with DnaA modulators region spans residues 1–92 (MTIKGGVVSQ…SELWTANDAT (92 aa)). The interval 92 to 144 (TGRRLDLKSRLEFESVGGAGYEAKAEPIEIVLPVSSDVPALAPTNGSKPSPVQ) is domain II. The domain III, AAA+ region stretch occupies residues 145 to 367 (GLQERFTFDT…GALNTLSARA (223 aa)). ATP is bound by residues Gly189, Gly191, Lys192, and Thr193. Residues 368-487 (GEGVSRLTLE…LETITRKLRG (120 aa)) are domain IV, binds dsDNA.

Belongs to the DnaA family. Oligomerizes as a right-handed, spiral filament on DNA at oriC.

Its subcellular location is the cytoplasm. In terms of biological role, plays an essential role in the initiation and regulation of chromosomal replication. ATP-DnaA binds to the origin of replication (oriC) to initiate formation of the DNA replication initiation complex once per cell cycle. Binds the DnaA box (a 9 base pair repeat at the origin) and separates the double-stranded (ds)DNA. Forms a right-handed helical filament on oriC DNA; dsDNA binds to the exterior of the filament while single-stranded (ss)DNA is stabiized in the filament's interior. The ATP-DnaA-oriC complex binds and stabilizes one strand of the AT-rich DNA unwinding element (DUE), permitting loading of DNA polymerase. After initiation quickly degrades to an ADP-DnaA complex that is not apt for DNA replication. Binds acidic phospholipids. The polypeptide is Chromosomal replication initiator protein DnaA (Caulobacter sp. (strain K31)).